We begin with the raw amino-acid sequence, 245 residues long: 1-(5-phosphoribosyl)-5-[(5-phosphoribosylamino)methylideneamino] imidazole-4-carboxamide isomerase (245 aa).

Asp8 functions as the Proton acceptor in the catalytic mechanism. Catalysis depends on Asp130, which acts as the Proton donor.

This sequence belongs to the HisA/HisF family.

Its subcellular location is the cytoplasm. The catalysed reaction is 1-(5-phospho-beta-D-ribosyl)-5-[(5-phospho-beta-D-ribosylamino)methylideneamino]imidazole-4-carboxamide = 5-[(5-phospho-1-deoxy-D-ribulos-1-ylimino)methylamino]-1-(5-phospho-beta-D-ribosyl)imidazole-4-carboxamide. Its pathway is amino-acid biosynthesis; L-histidine biosynthesis; L-histidine from 5-phospho-alpha-D-ribose 1-diphosphate: step 4/9. This Pseudomonas fluorescens (strain ATCC BAA-477 / NRRL B-23932 / Pf-5) protein is 1-(5-phosphoribosyl)-5-[(5-phosphoribosylamino)methylideneamino] imidazole-4-carboxamide isomerase.